The chain runs to 555 residues: 2-succinyl-5-enolpyruvyl-6-hydroxy-3-cyclohexene-1-carboxylate synthase (555 aa).

Belongs to the TPP enzyme family. MenD subfamily. As to quaternary structure, homodimer. Mg(2+) serves as cofactor. Requires Mn(2+) as cofactor. Thiamine diphosphate is required as a cofactor.

The catalysed reaction is isochorismate + 2-oxoglutarate + H(+) = 5-enolpyruvoyl-6-hydroxy-2-succinyl-cyclohex-3-ene-1-carboxylate + CO2. It functions in the pathway quinol/quinone metabolism; 1,4-dihydroxy-2-naphthoate biosynthesis; 1,4-dihydroxy-2-naphthoate from chorismate: step 2/7. It participates in quinol/quinone metabolism; menaquinone biosynthesis. Its function is as follows. Catalyzes the thiamine diphosphate-dependent decarboxylation of 2-oxoglutarate and the subsequent addition of the resulting succinic semialdehyde-thiamine pyrophosphate anion to isochorismate to yield 2-succinyl-5-enolpyruvyl-6-hydroxy-3-cyclohexene-1-carboxylate (SEPHCHC). This is 2-succinyl-5-enolpyruvyl-6-hydroxy-3-cyclohexene-1-carboxylate synthase from Cronobacter sakazakii (strain ATCC BAA-894) (Enterobacter sakazakii).